The sequence spans 132 residues: Large ribosomal subunit protein uL14 (132 aa).

It belongs to the universal ribosomal protein uL14 family. As to quaternary structure, part of the 50S ribosomal subunit. Forms a cluster with proteins L3 and L24e, part of which may contact the 16S rRNA in 2 intersubunit bridges.

In terms of biological role, binds to 23S rRNA. Forms part of two intersubunit bridges in the 70S ribosome. The sequence is that of Large ribosomal subunit protein uL14 from Methanobrevibacter smithii (strain ATCC 35061 / DSM 861 / OCM 144 / PS).